The following is a 364-amino-acid chain: Aminomethyltransferase (364 aa).

This sequence belongs to the GcvT family. As to quaternary structure, the glycine cleavage system is composed of four proteins: P, T, L and H.

It catalyses the reaction N(6)-[(R)-S(8)-aminomethyldihydrolipoyl]-L-lysyl-[protein] + (6S)-5,6,7,8-tetrahydrofolate = N(6)-[(R)-dihydrolipoyl]-L-lysyl-[protein] + (6R)-5,10-methylene-5,6,7,8-tetrahydrofolate + NH4(+). The glycine cleavage system catalyzes the degradation of glycine. The sequence is that of Aminomethyltransferase from Escherichia coli (strain 55989 / EAEC).